Consider the following 209-residue polypeptide: Vacuolar protein sorting-associated protein 28 homolog 1 (209 aa).

The region spanning 1–99 is the VPS28 N-terminal domain; that stretch reads MEVKLWNDKR…TSGVPATVEH (99 aa). The VPS28 C-terminal domain occupies 109 to 205; sequence SSASVVAECV…SYNSFMAALP (97 aa).

It belongs to the VPS28 family. In terms of assembly, component of the endosomal sorting required for transport complex I (ESCRT-I), composed of ELC, VPS28 and VPS37. Interacts with ELC.

The protein localises to the endosome. Component of the ESCRT-I complex (endosomal sorting complex required for transport I), a regulator of vesicular trafficking process. Required for the sorting of endocytic ubiquitinated cargos into multivesicular bodies (MVBs). Mediates the association to the ESCRT-0 complex. This is Vacuolar protein sorting-associated protein 28 homolog 1 (VPS28-1) from Arabidopsis thaliana (Mouse-ear cress).